The chain runs to 127 residues: Aspartate 1-decarboxylase (127 aa).

The active-site Schiff-base intermediate with substrate; via pyruvic acid is serine 25. Serine 25 bears the Pyruvic acid (Ser) mark. Residue threonine 57 coordinates substrate. Tyrosine 58 functions as the Proton donor in the catalytic mechanism. A substrate-binding site is contributed by glycine 73–alanine 75.

It belongs to the PanD family. Heterooctamer of four alpha and four beta subunits. It depends on pyruvate as a cofactor. Is synthesized initially as an inactive proenzyme, which is activated by self-cleavage at a specific serine bond to produce a beta-subunit with a hydroxyl group at its C-terminus and an alpha-subunit with a pyruvoyl group at its N-terminus.

The protein localises to the cytoplasm. The catalysed reaction is L-aspartate + H(+) = beta-alanine + CO2. It functions in the pathway cofactor biosynthesis; (R)-pantothenate biosynthesis; beta-alanine from L-aspartate: step 1/1. In terms of biological role, catalyzes the pyruvoyl-dependent decarboxylation of aspartate to produce beta-alanine. The chain is Aspartate 1-decarboxylase from Listeria innocua serovar 6a (strain ATCC BAA-680 / CLIP 11262).